Consider the following 302-residue polypeptide: Short-chain dehydrogenase/reductase 1 (302 aa).

NADP(+)-binding positions include N20–L23, R43, D71–V72, and N98. S170 contacts substrate. NADP(+) is bound by residues Y226, K230, and V257–N262. The active-site Proton acceptor is Y226.

The protein belongs to the short-chain dehydrogenases/reductases (SDR) family. As to expression, mainly expressed in flowers and flower buds, to a lesser extent in leaves and, at low levels, in stems and roots.

It functions in the pathway secondary metabolite biosynthesis; terpenoid biosynthesis. Functionally, component of the oleanane-type triterpene saponins (e.g. saponarioside A and saponarioside B) biosynthetic pathway, leading to the production of natural products with detergent properties used as traditional sources of soap. A dehydrogenase/reductase that, together with UGT74CD1, mediates the conversion of QA-tri to QA-triF; UGT74CD1 may transfer 4-keto-6-deoxy-glucose to QA-tri, which is in turn reduced to D-fucose by SDR1, thus leading to QA-triF formation via the initiation of the C-28 sugar chain. The protein is Short-chain dehydrogenase/reductase 1 of Saponaria officinalis (Common soapwort).